The chain runs to 61 residues: Keratin-associated protein 8-1 (61 aa).

An 11 X 2 AA repeats of G-[YCGS] region spans residues 13–49 (GCYWGSYGYPLGYSVGCGYGSTYSPVGYGLGYGYNGC).

It belongs to the KRTAP type 8 family. As to quaternary structure, interacts with hair keratins. As to expression, expression restricted exclusively to the cortical cells of hair follicles.

Its function is as follows. In the hair cortex, hair keratin intermediate filaments are embedded in an interfilamentous matrix, consisting of hair keratin-associated proteins (KRTAP), which are essential for the formation of a rigid and resistant hair shaft through their extensive disulfide bond cross-linking with abundant cysteine residues of hair keratins. The matrix proteins include the high-sulfur and high-glycine-tyrosine keratins. The sequence is that of Keratin-associated protein 8-1 (Krtap8-1) from Mus musculus (Mouse).